Reading from the N-terminus, the 233-residue chain is MDEMEDFFENDELDREPSPMGDEAIEDNSGEGGTRRVVEPKLLRTKRLANPRLALNERILTGPKGISALRETLKDFKPNPKDDPYANLEKLMKKYAYWGHLMFPKMKTEDVLNRVETLGTRRQVKVFMIKHRLGETGEDSEHEEQENQKNGIIDDGASDNDDDLFKDLPEKEVTTEKAKNSEKSDQKTAEIDENVEEEYRMMEEERLREEQEAKEAADEDALMEDFGDMNNDW.

Over residues 1–14 the composition is skewed to acidic residues; that stretch reads MDEMEDFFENDELD. Disordered stretches follow at residues 1–39 and 134–233; these read MDEMEDFFENDELDREPSPMGDEAIEDNSGEGGTRRVVE and GETG…NNDW. Composition is skewed to basic and acidic residues over residues 163–190 and 197–216; these read DLFKDLPEKEVTTEKAKNSEKSDQKTAE and EEYRMMEEERLREEQEAKEA. Residues 217–227 show a composition bias toward acidic residues; sequence ADEDALMEDFG.

This sequence belongs to the CSM3 family.

It localises to the cytoplasm. Its subcellular location is the nucleus. In terms of biological role, required for normal progression of S-phase. Important for cell survival after DNA damage or replication stress. In Caenorhabditis elegans, this protein is Protein TIPIN homolog.